A 354-amino-acid chain; its full sequence is Heat-inducible transcription repressor HrcA (354 aa).

This sequence belongs to the HrcA family.

In terms of biological role, negative regulator of class I heat shock genes (grpE-dnaK-dnaJ and groELS operons). Prevents heat-shock induction of these operons. The protein is Heat-inducible transcription repressor HrcA of Herpetosiphon aurantiacus (strain ATCC 23779 / DSM 785 / 114-95).